The sequence spans 97 residues: DNA/RNA-binding protein Alba (97 aa).

The residue at position 15 (lysine 15) is an N6-acetyllysine.

Belongs to the histone-like Alba family. In terms of processing, acetylated. Acetylation at Lys-15 decreases DNA-binding affinity.

The protein localises to the cytoplasm. It localises to the chromosome. Binds double-stranded DNA tightly but without sequence specificity. Involved in DNA compaction. In Sulfolobus acidocaldarius (strain ATCC 33909 / DSM 639 / JCM 8929 / NBRC 15157 / NCIMB 11770), this protein is DNA/RNA-binding protein Alba.